We begin with the raw amino-acid sequence, 302 residues long: tRNA-cytidine(32) 2-sulfurtransferase (302 aa).

The PP-loop motif motif lies at 57-62; the sequence is SGGKDS. [4Fe-4S] cluster-binding residues include C132, C135, and C223.

Belongs to the TtcA family. As to quaternary structure, homodimer. Mg(2+) is required as a cofactor. [4Fe-4S] cluster serves as cofactor.

It localises to the cytoplasm. It catalyses the reaction cytidine(32) in tRNA + S-sulfanyl-L-cysteinyl-[cysteine desulfurase] + AH2 + ATP = 2-thiocytidine(32) in tRNA + L-cysteinyl-[cysteine desulfurase] + A + AMP + diphosphate + H(+). It participates in tRNA modification. Catalyzes the ATP-dependent 2-thiolation of cytidine in position 32 of tRNA, to form 2-thiocytidine (s(2)C32). The sulfur atoms are provided by the cysteine/cysteine desulfurase (IscS) system. The sequence is that of tRNA-cytidine(32) 2-sulfurtransferase from Marinobacter nauticus (strain ATCC 700491 / DSM 11845 / VT8) (Marinobacter aquaeolei).